The primary structure comprises 153 residues: 6,7-dimethyl-8-ribityllumazine synthase (153 aa).

5-amino-6-(D-ribitylamino)uracil is bound by residues phenylalanine 22, 56 to 58 (AFE), and 80 to 82 (AVI). 85-86 (AT) contacts (2S)-2-hydroxy-3-oxobutyl phosphate. Histidine 88 functions as the Proton donor in the catalytic mechanism. Residue phenylalanine 113 coordinates 5-amino-6-(D-ribitylamino)uracil. A (2S)-2-hydroxy-3-oxobutyl phosphate-binding site is contributed by arginine 127.

The protein belongs to the DMRL synthase family.

The enzyme catalyses (2S)-2-hydroxy-3-oxobutyl phosphate + 5-amino-6-(D-ribitylamino)uracil = 6,7-dimethyl-8-(1-D-ribityl)lumazine + phosphate + 2 H2O + H(+). Its pathway is cofactor biosynthesis; riboflavin biosynthesis; riboflavin from 2-hydroxy-3-oxobutyl phosphate and 5-amino-6-(D-ribitylamino)uracil: step 1/2. In terms of biological role, catalyzes the formation of 6,7-dimethyl-8-ribityllumazine by condensation of 5-amino-6-(D-ribitylamino)uracil with 3,4-dihydroxy-2-butanone 4-phosphate. This is the penultimate step in the biosynthesis of riboflavin. This Clostridium tetani (strain Massachusetts / E88) protein is 6,7-dimethyl-8-ribityllumazine synthase.